Here is a 146-residue protein sequence, read N- to C-terminus: Large ribosomal subunit protein uL15 (146 aa).

A compositionally biased stretch (basic and acidic residues) spans 1–13 (MKLNELKPNEGSR). The disordered stretch occupies residues 1-54 (MKLNELKPNEGSRRNRKRVGRGTSSGYGKTAGRGQKGQLARTGGKTRLGFEGGQ). A compositionally biased stretch (gly residues) spans 23–35 (TSSGYGKTAGRGQ).

It belongs to the universal ribosomal protein uL15 family. Part of the 50S ribosomal subunit.

In terms of biological role, binds to the 23S rRNA. In Lactobacillus johnsonii (strain CNCM I-12250 / La1 / NCC 533), this protein is Large ribosomal subunit protein uL15.